The sequence spans 177 residues: ATP-dependent protease subunit HslV (177 aa).

T4 is an active-site residue. Na(+)-binding residues include S159, C162, and T165.

It belongs to the peptidase T1B family. HslV subfamily. As to quaternary structure, a double ring-shaped homohexamer of HslV is capped on each side by a ring-shaped HslU homohexamer. The assembly of the HslU/HslV complex is dependent on binding of ATP.

Its subcellular location is the cytoplasm. It carries out the reaction ATP-dependent cleavage of peptide bonds with broad specificity.. With respect to regulation, allosterically activated by HslU binding. Its function is as follows. Protease subunit of a proteasome-like degradation complex believed to be a general protein degrading machinery. The sequence is that of ATP-dependent protease subunit HslV from Mesorhizobium japonicum (strain LMG 29417 / CECT 9101 / MAFF 303099) (Mesorhizobium loti (strain MAFF 303099)).